Here is a 162-residue protein sequence, read N- to C-terminus: Interleukin-15 (162 aa).

Residues 1–29 (MRILKPYLRSTSIQCYLCLLLNSHFLTEA) form the signal peptide. Positions 30–48 (GIHVFILGCISAGLPKTEA) are excised as a propeptide. 2 disulfides stabilise this stretch: Cys-83-Cys-133 and Cys-90-Cys-136. 3 N-linked (GlcNAc...) asparagine glycosylation sites follow: Asn-113, Asn-121, and Asn-127.

It belongs to the IL-15/IL-21 family.

The protein localises to the secreted. Its function is as follows. Cytokine that plays a major role in the development of inflammatory and protective immune responses to microbial invaders and parasites by modulating immune cells of both the innate and adaptive immune systems. Stimulates the proliferation of natural killer cells, T-cells and B-cells and promotes the secretion of several cytokines. In monocytes, induces the production of IL8 and monocyte chemotactic protein 1/CCL2, two chemokines that attract neutrophils and monocytes respectively to sites of infection. Unlike most cytokines, which are secreted in soluble form, IL15 is expressed in association with its high affinity IL15RA on the surface of IL15-producing cells and delivers signals to target cells that express IL2RB and IL2RG receptor subunits. Binding to its receptor triggers the phosphorylation of JAK1 and JAK3 and the recruitment and subsequent phosphorylation of signal transducer and activator of transcription-3/STAT3 and STAT5. In mast cells, induces the rapid tyrosine phosphorylation of STAT6 and thereby controls mast cell survival and release of cytokines such as IL4. The chain is Interleukin-15 (IL15) from Bubalus bubalis (Domestic water buffalo).